The following is a 357-amino-acid chain: Protein pelota homolog (357 aa).

The protein belongs to the eukaryotic release factor 1 family. Pelota subfamily. Monomer. The cofactor is a divalent metal cation.

The protein resides in the cytoplasm. May function in recognizing stalled ribosomes, interact with stem-loop structures in stalled mRNA molecules, and effect endonucleolytic cleavage of the mRNA. May play a role in the release non-functional ribosomes and degradation of damaged mRNAs. Has endoribonuclease activity. This chain is Protein pelota homolog, found in Halobacterium salinarum (strain ATCC 29341 / DSM 671 / R1).